A 39-amino-acid polypeptide reads, in one-letter code: Natriuretic peptide NsNP-b (39 aa).

Positions 1–8 (SGSKTAKI) are excised as a propeptide. Cysteine 12 and cysteine 28 are joined by a disulfide. The disordered stretch occupies residues 19–39 (RIGSTSGMGCGSVPKPTPGGS).

The protein belongs to the natriuretic peptide family. In terms of tissue distribution, expressed by the venom gland.

It is found in the secreted. Functionally, snake venom natriuretic peptide that targets both NPR1 and NPR2. Exhibits hypotensive and vasodepressor activities. The polypeptide is Natriuretic peptide NsNP-b (Notechis scutatus scutatus (Mainland tiger snake)).